Reading from the N-terminus, the 178-residue chain is MSGGKYVDSEGHLYTVPIREQGNIYKPNNKAMADEVNEKQVYDAHTKEIDLVNRDPKHLNDDVVKIDFEDVIAEPEGTHSFDGIWKASFTTFTVTKYWFYRLLSTIFGIPMALIWGIYFAILSFLHIWAVVPCIKSFLIEIQCISRVYSIYVHTFCDPLFEAIGKIFSNVRISMQKEI.

Ser-2 carries the N-acetylserine modification. Ser-2 is modified (phosphoserine). The tract at residues 2-94 (SGGKYVDSEG…WKASFTTFTV (93 aa)) is required for homooligomerization. Over 2 to 104 (SGGKYVDSEG…TKYWFYRLLS (103 aa)) the chain is Cytoplasmic. Lys-5 carries the post-translational modification N6-acetyllysine; alternate. Residue Lys-5 forms a Glycyl lysine isopeptide (Lys-Gly) (interchain with G-Cter in ubiquitin); alternate linkage. Position 6 is a phosphotyrosine (Tyr-6). Phosphoserine is present on Ser-9. A Phosphotyrosine; by ABL1 modification is found at Tyr-14. Tyr-25 is subject to Phosphotyrosine. Residues Lys-26, Lys-30, Lys-39, Lys-47, and Lys-57 each participate in a glycyl lysine isopeptide (Lys-Gly) (interchain with G-Cter in ubiquitin) cross-link. Positions 82 to 94 (DGIWKASFTTFTV) are interaction with CAVIN3. An intramembrane region (helical) is located at residues 105 to 125 (TIFGIPMALIWGIYFAILSFL). Topologically, residues 126–178 (HIWAVVPCIKSFLIEIQCISRVYSIYVHTFCDPLFEAIGKIFSNVRISMQKEI) are cytoplasmic. The interacts with SPRY1, SPRY2, SPRY3 and SPRY4 stretch occupies residues 131 to 142 (VPCIKSFLIEIQ). 3 S-palmitoyl cysteine lipidation sites follow: Cys-133, Cys-143, and Cys-156. An interacts with SPRY1, SPRY2, and SPRY4 region spans residues 149 to 160 (SIYVHTFCDPLF). Residues 167 to 178 (FSNVRISMQKEI) are interacts with SPRY1, SPRY2, SPRY3 and SPRY4.

Belongs to the caveolin family. In terms of assembly, homooligomer. Interacts with GLIPR2. Interacts with NOSTRIN. Interacts with SNAP25 and STX1A. Interacts (via the N-terminus) with DPP4; the interaction is direct. Interacts with CTNNB1, CDH1 and JUP. Interacts with PACSIN2; this interaction induces membrane tubulation. Interacts with SLC7A9. Interacts with BMX and BTK. Interacts with TGFBR1. Interacts with CAVIN3 (via leucine-zipper domain) in a cholesterol-sensitive manner. Interacts with CAVIN1. Interacts with EHD2 in a cholesterol-dependent manner. Forms a ternary complex with UBXN6 and VCP; mediates CAV1 targeting to lysosomes for degradation. Interacts with ABCG1; this interaction regulates ABCG1-mediated cholesterol efflux. Interacts with NEU3; this interaction enhances NEU3 sialidase activity within caveola. Interacts (via C-terminus) with SPRY1, SPRY2 (via C-terminus), SPRY3, and SPRY4. Interacts with IGFBP5; this interaction allows trafficking of IGFBP5 from the plasma membrane to the nucleus. In terms of processing, phosphorylated at Tyr-14 by ABL1 in response to oxidative stress. Post-translationally, ubiquitinated. Undergo monoubiquitination and multi- and/or polyubiquitination. Monoubiquitination of N-terminal lysines promotes integration in a ternary complex with UBXN6 and VCP which promotes oligomeric CAV1 targeting to lysosomes for degradation. Ubiquitinated by ZNRF1; leading to degradation and modulation of the TLR4-mediated immune response.

Its subcellular location is the golgi apparatus membrane. It is found in the cell membrane. The protein resides in the membrane. It localises to the caveola. The protein localises to the membrane raft. May act as a scaffolding protein within caveolar membranes. Forms a stable heterooligomeric complex with CAV2 that targets to lipid rafts and drives caveolae formation. Mediates the recruitment of CAVIN proteins (CAVIN1/2/3/4) to the caveolae. Interacts directly with G-protein alpha subunits and can functionally regulate their activity. Involved in the costimulatory signal essential for T-cell receptor (TCR)-mediated T-cell activation. Its binding to DPP4 induces T-cell proliferation and NF-kappa-B activation in a T-cell receptor/CD3-dependent manner. Recruits CTNNB1 to caveolar membranes and may regulate CTNNB1-mediated signaling through the Wnt pathway. Negatively regulates TGFB1-mediated activation of SMAD2/3 by mediating the internalization of TGFBR1 from membrane rafts leading to its subsequent degradation. Binds 20(S)-hydroxycholesterol (20(S)-OHC). In Oryctolagus cuniculus (Rabbit), this protein is Caveolin-1 (CAV1).